The following is a 778-amino-acid chain: Protein translocase subunit SecA 2 (778 aa).

ATP contacts are provided by residues Gln94, 112 to 116, and Asp501; that span reads GEGKT.

This sequence belongs to the SecA family. As to quaternary structure, monomer and homodimer. Part of the essential Sec protein translocation apparatus which comprises SecA, SecYEG and auxiliary proteins SecDF. Other proteins may also be involved.

Its subcellular location is the cell membrane. The protein resides in the cytoplasm. The catalysed reaction is ATP + H2O + cellular proteinSide 1 = ADP + phosphate + cellular proteinSide 2.. Part of the Sec protein translocase complex. Interacts with the SecYEG preprotein conducting channel. Has a central role in coupling the hydrolysis of ATP to the transfer of proteins into and across the cell membrane, serving as an ATP-driven molecular motor driving the stepwise translocation of polypeptide chains across the membrane. The polypeptide is Protein translocase subunit SecA 2 (Mycobacterium leprae (strain TN)).